A 336-amino-acid polypeptide reads, in one-letter code: DNA-directed RNA polymerase subunit alpha (336 aa).

The tract at residues 1 to 238 is alpha N-terminal domain (alpha-NTD); the sequence is MNDLDLNLVP…NLFLPFLQAE (238 aa). The segment at 267 to 336 is alpha C-terminal domain (alpha-CTD); sequence AKKVTFQHIF…LQKRFGMRLQ (70 aa).

Belongs to the RNA polymerase alpha chain family. As to quaternary structure, in plastids the minimal PEP RNA polymerase catalytic core is composed of four subunits: alpha, beta, beta', and beta''. When a (nuclear-encoded) sigma factor is associated with the core the holoenzyme is formed, which can initiate transcription.

The protein localises to the plastid. Its subcellular location is the chloroplast. It carries out the reaction RNA(n) + a ribonucleoside 5'-triphosphate = RNA(n+1) + diphosphate. DNA-dependent RNA polymerase catalyzes the transcription of DNA into RNA using the four ribonucleoside triphosphates as substrates. This Huperzia lucidula (Shining clubmoss) protein is DNA-directed RNA polymerase subunit alpha.